Consider the following 114-residue polypeptide: Evasin P1096 (114 aa).

The signal sequence occupies residues 1 to 23 (MELNAFTILHIAVFIAVGYYANT). 3 disulfide bridges follow: Cys47-Cys65, Cys51-Cys67, and Cys61-Cys78. Asn50 carries N-linked (GlcNAc...) asparagine glycosylation. The tract at residues 89-114 (DPSQDPSIDEAAPRESVSKRRSNGES) is disordered. The segment covering 99-114 (AAPRESVSKRRSNGES) has biased composition (basic and acidic residues).

It is found in the secreted. Its function is as follows. Salivary chemokine-binding protein which binds to host chemokine CXCL8. This Ixodes ricinus (Common tick) protein is Evasin P1096.